The chain runs to 169 residues: Positive control factor (169 aa).

The H-T-H motif DNA-binding region spans tyrosine 132–methionine 157.

Functionally, positive regulatory protein that acts at the late promoter PL. This Bacillus subtilis (strain 168) protein is Positive control factor (xpf).